Here is a 685-residue protein sequence, read N- to C-terminus: MPEQNRILCRELSLLAFNRRVLAQAEDKNVPLLERLRFLCIVSSNLDEFFEVRMAWLKRENKLHPRRRLDNGKMPSETIADVTEAARSLIRHQYDLFNNVLQPELARESIHFYRRRNWTGAQKKWIEDYFDRELLPILTPIGLDPSHPFPRPLNKSLNFAVELDGTDAFGRPSGMAIVQAPRILPRVVPLPSELCGGGHGFVFLSSILHAHVGKLFPGMNVKGCHQFRLTRDSDLTVDEEDLQNLRAAIQNELHDREYGDGVRLEVADTCPAYIRDFLLAQFKLTAAELYQVKGPVNLVRLNAVPDLVNRPDLKFPTHTPGRLKALGKTASIFDLVRQSPILLHHPYQSFDPVVEMMREAAADPDVLAVKMTIYRTGTRSELVRALMKAALAGKQVTVVVELMARFDEANNVNWAKQLEEAGAHVVYGVFGYKVHAKMALVIRREDGVLKRYAHLGTGNYHQGTSRIYTDFGIITADEQITADVNTLFMEITGLGKPGRLNKLYQSPFTLHKMVIDRIARETEHAKAGKPARITAKMNSLIEPTVIEALYRASAAGVQIDLIVRGMCTLRPGVKGLSENIRVRSIIGRQLEHARVYCFHNNGADDTFISSADWMGRNFFRRIETAAPITAPELKKRVIREGLEMALADNTHAWLMQPDGGYIRAAPAEGESEADLQNDLWTLLGG.

Asn-45 provides a ligand contact to ATP. Arg-375 and Arg-405 together coordinate Mg(2+). The active-site Phosphohistidine intermediate is His-435. Tyr-468, Arg-564, and His-592 together coordinate ATP.

Belongs to the polyphosphate kinase 1 (PPK1) family. Mg(2+) is required as a cofactor. In terms of processing, an intermediate of this reaction is the autophosphorylated ppk in which a phosphate is covalently linked to a histidine residue through a N-P bond.

It carries out the reaction [phosphate](n) + ATP = [phosphate](n+1) + ADP. In terms of biological role, catalyzes the reversible transfer of the terminal phosphate of ATP to form a long-chain polyphosphate (polyP). The polypeptide is Polyphosphate kinase (Neisseria meningitidis serogroup A / serotype 4A (strain DSM 15465 / Z2491)).